A 272-amino-acid chain; its full sequence is Ethanolamine ammonia-lyase small subunit (272 aa).

3 residues coordinate adenosylcob(III)alamin: Val161, Glu182, and Cys211.

The protein belongs to the EutC family. In terms of assembly, the basic unit is a heterodimer which dimerizes to form tetramers. The heterotetramers trimerize; 6 large subunits form a core ring with 6 small subunits projecting outwards. Adenosylcob(III)alamin serves as cofactor.

The protein resides in the bacterial microcompartment. The enzyme catalyses ethanolamine = acetaldehyde + NH4(+). Its pathway is amine and polyamine degradation; ethanolamine degradation. In terms of biological role, catalyzes the deamination of various vicinal amino-alcohols to oxo compounds. Allows this organism to utilize ethanolamine as the sole source of nitrogen and carbon in the presence of external vitamin B12. This is Ethanolamine ammonia-lyase small subunit from Xanthomonas campestris pv. campestris (strain ATCC 33913 / DSM 3586 / NCPPB 528 / LMG 568 / P 25).